A 289-amino-acid chain; its full sequence is Diaminopimelate epimerase (289 aa).

3 residues coordinate substrate: Asn13, Gln47, and Asn67. The Proton donor role is filled by Cys76. Substrate-binding positions include 77–78 (GN), Asn167, Asn200, and 218–219 (ER). The active-site Proton acceptor is the Cys227. Position 228–229 (228–229 (GT)) interacts with substrate.

The protein belongs to the diaminopimelate epimerase family. Homodimer.

Its subcellular location is the cytoplasm. The enzyme catalyses (2S,6S)-2,6-diaminopimelate = meso-2,6-diaminopimelate. Its pathway is amino-acid biosynthesis; L-lysine biosynthesis via DAP pathway; DL-2,6-diaminopimelate from LL-2,6-diaminopimelate: step 1/1. Catalyzes the stereoinversion of LL-2,6-diaminopimelate (L,L-DAP) to meso-diaminopimelate (meso-DAP), a precursor of L-lysine and an essential component of the bacterial peptidoglycan. In Burkholderia thailandensis (strain ATCC 700388 / DSM 13276 / CCUG 48851 / CIP 106301 / E264), this protein is Diaminopimelate epimerase.